The chain runs to 325 residues: Lipoyl synthase (325 aa).

Cys66, Cys71, Cys77, Cys92, Cys96, Cys99, and Ser303 together coordinate [4Fe-4S] cluster. The region spanning 78-292 (WEDREATFLI…AQFAEGLGFA (215 aa)) is the Radical SAM core domain.

The protein belongs to the radical SAM superfamily. Lipoyl synthase family. [4Fe-4S] cluster serves as cofactor.

The protein resides in the cytoplasm. It carries out the reaction [[Fe-S] cluster scaffold protein carrying a second [4Fe-4S](2+) cluster] + N(6)-octanoyl-L-lysyl-[protein] + 2 oxidized [2Fe-2S]-[ferredoxin] + 2 S-adenosyl-L-methionine + 4 H(+) = [[Fe-S] cluster scaffold protein] + N(6)-[(R)-dihydrolipoyl]-L-lysyl-[protein] + 4 Fe(3+) + 2 hydrogen sulfide + 2 5'-deoxyadenosine + 2 L-methionine + 2 reduced [2Fe-2S]-[ferredoxin]. It functions in the pathway protein modification; protein lipoylation via endogenous pathway; protein N(6)-(lipoyl)lysine from octanoyl-[acyl-carrier-protein]: step 2/2. Functionally, catalyzes the radical-mediated insertion of two sulfur atoms into the C-6 and C-8 positions of the octanoyl moiety bound to the lipoyl domains of lipoate-dependent enzymes, thereby converting the octanoylated domains into lipoylated derivatives. The protein is Lipoyl synthase of Mycobacterium sp. (strain JLS).